Reading from the N-terminus, the 783-residue chain is Putative ATP-dependent DNA helicase fml2 (783 aa).

The 169-residue stretch at 118–286 folds into the Helicase ATP-binding domain; that stretch reads FCEQALFHNL…KVVDCLHISK (169 aa). 131-138 is a binding site for ATP; it reads LPTGLGKT. The short motif at 234–237 is the DEAH box element; sequence DEAH. Residues 450–619 enclose the Helicase C-terminal domain; the sequence is KMNHLLELLK…GKKIALKKDV (170 aa).

It belongs to the DEAD box helicase family. DEAH subfamily. FANCM sub-subfamily.

The protein localises to the nucleus. It is found in the nucleolus. It catalyses the reaction ATP + H2O = ADP + phosphate + H(+). The sequence is that of Putative ATP-dependent DNA helicase fml2 from Schizosaccharomyces pombe (strain 972 / ATCC 24843) (Fission yeast).